A 452-amino-acid polypeptide reads, in one-letter code: Trigger factor (452 aa).

The region spanning 171–256 is the PPIase FKBP-type domain; sequence GDRVTLAFKG…ATLIEAPQDA (86 aa).

Belongs to the FKBP-type PPIase family. Tig subfamily.

The protein resides in the cytoplasm. The catalysed reaction is [protein]-peptidylproline (omega=180) = [protein]-peptidylproline (omega=0). Involved in protein export. Acts as a chaperone by maintaining the newly synthesized protein in an open conformation. Functions as a peptidyl-prolyl cis-trans isomerase. In Afipia carboxidovorans (strain ATCC 49405 / DSM 1227 / KCTC 32145 / OM5) (Oligotropha carboxidovorans), this protein is Trigger factor.